A 236-amino-acid chain; its full sequence is LexA repressor (236 aa).

The segment at 1-25 (MNDSNDTSVAGGAAGADSRVLSADS) is disordered. The segment at residues 51–71 (IREIGDAVGLTSTSSVAHQLR) is a DNA-binding region (H-T-H motif). Active-site for autocatalytic cleavage activity residues include S160 and K197.

Belongs to the peptidase S24 family. In terms of assembly, homodimer.

The catalysed reaction is Hydrolysis of Ala-|-Gly bond in repressor LexA.. Its function is as follows. Represses a number of genes involved in the response to DNA damage (SOS response), including recA and lexA. In the presence of single-stranded DNA, RecA interacts with LexA causing an autocatalytic cleavage which disrupts the DNA-binding part of LexA, leading to derepression of the SOS regulon and eventually DNA repair. The protein is LexA repressor of Mycobacterium bovis (strain BCG / Pasteur 1173P2).